The following is a 175-amino-acid chain: Ribosome maturation factor RimM (175 aa).

In terms of domain architecture, PRC barrel spans 97–175 (EGEFYWHQLE…RMVVDWDPEF (79 aa)).

The protein belongs to the RimM family. In terms of assembly, binds ribosomal protein uS19.

The protein resides in the cytoplasm. An accessory protein needed during the final step in the assembly of 30S ribosomal subunit, possibly for assembly of the head region. Essential for efficient processing of 16S rRNA. May be needed both before and after RbfA during the maturation of 16S rRNA. It has affinity for free ribosomal 30S subunits but not for 70S ribosomes. In Marinobacter nauticus (strain ATCC 700491 / DSM 11845 / VT8) (Marinobacter aquaeolei), this protein is Ribosome maturation factor RimM.